Reading from the N-terminus, the 244-residue chain is 14-3-3 protein beta/alpha (244 aa).

At Met-1 the chain carries N-acetylmethionine.

It belongs to the 14-3-3 family. In terms of assembly, homodimer, and heterodimer with other family members.

It localises to the cytoplasm. Functionally, adapter protein implicated in the regulation of a large spectrum of both general and specialized signaling pathways. Binds to a large number of partners, usually by recognition of a phosphoserine or phosphothreonine motif. Binding generally results in the modulation of the activity of the binding partner. The sequence is that of 14-3-3 protein beta/alpha (ywhab) from Xenopus tropicalis (Western clawed frog).